The following is a 238-amino-acid chain: Ribosomal RNA small subunit methyltransferase E 1 (238 aa).

Belongs to the RNA methyltransferase RsmE family.

It is found in the cytoplasm. It carries out the reaction uridine(1498) in 16S rRNA + S-adenosyl-L-methionine = N(3)-methyluridine(1498) in 16S rRNA + S-adenosyl-L-homocysteine + H(+). In terms of biological role, specifically methylates the N3 position of the uracil ring of uridine 1498 (m3U1498) in 16S rRNA. Acts on the fully assembled 30S ribosomal subunit. The polypeptide is Ribosomal RNA small subunit methyltransferase E 1 (rsmE1) (Borreliella burgdorferi (strain ATCC 35210 / DSM 4680 / CIP 102532 / B31) (Borrelia burgdorferi)).